The chain runs to 359 residues: 4-galactosyl-N-acetylglucosaminide 3-alpha-L-fucosyltransferase FUT6 (359 aa).

The Cytoplasmic segment spans residues 1–14 (MDPLGPAKTQWSWR). A helical; Signal-anchor for type II membrane protein transmembrane segment spans residues 15-34 (CCLTALLFQLLVAVCFFSYL). The Lumenal portion of the chain corresponds to 35-359 (RVSRDDPTVY…QTRSIAAWFT (325 aa)). The determines site-specific fucosylation stretch occupies residues 73-112 (KPIALPRCSEMVPGTADCNITADRKVYPQADAVIVHHREV). Residues Asn91, Asn153, and Asn184 are each glycosylated (N-linked (GlcNAc...) asparagine).

It belongs to the glycosyltransferase 10 family. In terms of assembly, homodimer and monomer. Monomer (secreted form). In terms of processing, N-glycosylated. Post-translationally, proteolytic cleavage releases a secreted glycoform of 43 kDa.

It localises to the golgi apparatus. The protein localises to the golgi stack membrane. It is found in the secreted. It carries out the reaction a beta-D-galactosyl-(1-&gt;4)-N-acetyl-beta-D-glucosaminyl derivative + GDP-beta-L-fucose = a beta-D-galactosyl-(1-&gt;4)-[alpha-L-fucosyl-(1-&gt;3)]-N-acetyl-beta-D-glucosaminyl derivative + GDP + H(+). It catalyses the reaction an N-acetyl-alpha-neuraminyl-(2-&gt;3)-beta-D-galactosyl-(1-&gt;4)-N-acetyl-beta-D-glucosaminyl derivative + GDP-beta-L-fucose = an alpha-Neu5Ac-(2-&gt;3)-beta-D-Gal-(1-&gt;4)-[alpha-L-Fuc-(1-&gt;3)]-beta-D-GlcNAc derivative + GDP + H(+). The catalysed reaction is an alpha-Neu5Ac-(2-&gt;3)-beta-D-Gal-(1-&gt;4)-beta-D-GlcNAc-(1-&gt;3)-beta-D-Gal-(1-&gt;4)-[alpha-L-Fuc-(1-&gt;3)]-beta-D-GlcNAc derivative + GDP-beta-L-fucose = an alpha-Neu5Ac-(2-&gt;3)-beta-D-Gal-(1-&gt;4)-[alpha-L-Fuc-(1-&gt;3)]-beta-D-GlcNAc-(1-&gt;3)-beta-D-Gal-(1-&gt;4)-[alpha-L-Fuc-(1-&gt;3)]-beta-D-GlcNAc derivative + GDP + H(+). The enzyme catalyses a neolactoside nLc6Cer + GDP-beta-L-fucose = beta-D-Gal-(1-&gt;4)-[alpha-L-Fuc-(1-&gt;3)]-beta-D-GlcNAc-(1-&gt;3)-beta-D-Gal-(1-&gt;4)-beta-D-GlcNAc-(1-&gt;3)-beta-D-Gal-(1-&gt;4)-beta-D-Glc-(1&lt;-&gt;1')-Cer + GDP + H(+). It carries out the reaction a neolactoside nLc6Cer + GDP-beta-L-fucose = beta-D-galactosyl-(1-&gt;4)-N-acetyl-beta-D-glucosaminyl-(1-&gt;3)-beta-D-galactosyl-(1-&gt;4)-[alpha-L-fucosyl-(1-&gt;3)]-N-acetyl-beta-D-glucosaminyl-(1-&gt;3)-beta-D-galactosyl-(1-&gt;4)-beta-D-glucosyl-(1&lt;-&gt;1')-ceramide + GDP + H(+). It catalyses the reaction a neolactoside VI(3)-alpha-NeuNAc-nLc6Cer + GDP-beta-L-fucose = a neolactoside VI(3)-alpha-NeuAc,V(3)-alphaFuc-nLc6Cer + GDP + H(+). The catalysed reaction is beta-D-galactosyl-(1-&gt;4)-N-acetyl-D-glucosamine + GDP-beta-L-fucose = beta-D-galactosyl-(1-&gt;4)-[alpha-L-fucosyl-(1-&gt;3)]-N-acetyl-D-glucosamine + GDP + H(+). The enzyme catalyses N-acetyl-alpha-neuraminosyl-(2-&gt;3)-beta-D-galactosyl-(1-&gt;4)-N-acetyl-beta-D-glucosamine + GDP-beta-L-fucose = N-acetyl-alpha-neuraminosyl-(2-&gt;3)-beta-D-galactosyl-(1-&gt;4)-[alpha-L-fucosyl-(1-&gt;3)]-N-acetyl-beta-D-glucosamine + GDP + H(+). It carries out the reaction lactose + GDP-beta-L-fucose = beta-D-galactosyl-(1-&gt;4)-[alpha-L-fucosyl-(1-&gt;3)]-D-glucose + GDP + H(+). It catalyses the reaction alpha-L-Fuc-(1-&gt;2)-beta-D-Gal-(1-&gt;4)-D-Glc + GDP-beta-L-fucose = alpha-L-Fuc-(1-&gt;2)-beta-D-Gal-(1-&gt;4)-[alpha-L-Fuc-(1-&gt;3)]-D-Glc + GDP + H(+). The catalysed reaction is a beta-D-galactosyl-(1-&gt;4)-N-acetyl-beta-D-6-sulfooxy-glucosaminyl derivative + GDP-beta-L-fucose = a beta-D-galactosyl-(1-&gt;4)-[alpha-L-fucosyl-(1-&gt;3)]-N-acetyl-beta-D-6-sulfooxy-glucosaminyl derivative + GDP + H(+). Its pathway is protein modification; protein glycosylation. Its function is as follows. Catalyzes the transfer of L-fucose, from a guanosine diphosphate-beta-L-fucose, to the N-acetyl glucosamine (GlcNAc) of a distal alpha2,3 sialylated lactosamine unit of a glycoprotein- or glycolipid-linked sialopolylactosamines chain or of a distal or internal lactosamine unit of a neutral glycoprotein- or glycolipid-linked polylactosamines chain through an alpha-1,3 glycosidic linkage and participates in surface expression of the sialyl Lewis X (sLe(x)), Lewis X (Le(x)) and non sialylated VIM2 determinants. Moreover transfers fucose to H-type 2 (Fucalpha1-2Galbeta1-4GlcNAc) chain acceptor substrates and participates in difucosylated sialyl Lewis x determinants. Also fucosylates a polylactosamine substrate having a 6 sulfate modification at the GlcNAc moiety and gives rise to sialyl and non-sialyl 6-sulfo lewis X. Does not have activity towards type 1 ((Galbeta1-3GlcNAc)) and H-type 1 chain (Fucalpha1-2Galbeta1-3GlcNAc) acceptors substrates. In Pongo pygmaeus (Bornean orangutan), this protein is 4-galactosyl-N-acetylglucosaminide 3-alpha-L-fucosyltransferase FUT6.